Here is a 329-residue protein sequence, read N- to C-terminus: Glutamyl-tRNA reductase (329 aa).

Substrate contacts are provided by residues 51–54 (TCLR), Ser99, 104–106 (EDQ), and Gln110. Catalysis depends on Cys52, which acts as the Nucleophile. Residue 179 to 184 (GIGELA) participates in NADP(+) binding.

It belongs to the glutamyl-tRNA reductase family. In terms of assembly, homodimer.

It carries out the reaction (S)-4-amino-5-oxopentanoate + tRNA(Glu) + NADP(+) = L-glutamyl-tRNA(Glu) + NADPH + H(+). The protein operates within porphyrin-containing compound metabolism; protoporphyrin-IX biosynthesis; 5-aminolevulinate from L-glutamyl-tRNA(Glu): step 1/2. Its function is as follows. Catalyzes the NADPH-dependent reduction of glutamyl-tRNA(Glu) to glutamate 1-semialdehyde (GSA). The sequence is that of Glutamyl-tRNA reductase from Fusobacterium nucleatum subsp. nucleatum (strain ATCC 25586 / DSM 15643 / BCRC 10681 / CIP 101130 / JCM 8532 / KCTC 2640 / LMG 13131 / VPI 4355).